A 301-amino-acid polypeptide reads, in one-letter code: GTPase Era (301 aa).

The 169-residue stretch at 7-175 (YCGFIAIVGR…AAIVRKHLPE (169 aa)) folds into the Era-type G domain. Residues 15–22 (GRPNVGKS) are G1. 15–22 (GRPNVGKS) contributes to the GTP binding site. The interval 41-45 (QTTRH) is G2. The interval 62-65 (DTPG) is G3. GTP is bound by residues 62–66 (DTPGL) and 124–127 (NKVD). The tract at residues 124–127 (NKVD) is G4. Positions 154 to 156 (ISA) are G5. Residues 206–283 (LGAELPYSVT…HLELWVKVKS (78 aa)) form the KH type-2 domain.

It belongs to the TRAFAC class TrmE-Era-EngA-EngB-Septin-like GTPase superfamily. Era GTPase family. Monomer.

Its subcellular location is the cytoplasm. It is found in the cell inner membrane. An essential GTPase that binds both GDP and GTP, with rapid nucleotide exchange. Plays a role in 16S rRNA processing and 30S ribosomal subunit biogenesis and possibly also in cell cycle regulation and energy metabolism. In Escherichia coli (strain K12 / DH10B), this protein is GTPase Era.